The chain runs to 619 residues: DNA mismatch repair protein MutL (619 aa).

Positions 358–401 (GGNQFARPSEAREAATRFSITSSREPAASGGSSGGASWPHAQPG) are disordered.

This sequence belongs to the DNA mismatch repair MutL/HexB family.

Functionally, this protein is involved in the repair of mismatches in DNA. It is required for dam-dependent methyl-directed DNA mismatch repair. May act as a 'molecular matchmaker', a protein that promotes the formation of a stable complex between two or more DNA-binding proteins in an ATP-dependent manner without itself being part of a final effector complex. The protein is DNA mismatch repair protein MutL of Klebsiella pneumoniae (strain 342).